Consider the following 474-residue polypeptide: 1-aminocyclopropane-1-carboxylate synthase 4 (474 aa).

Positions 47 and 85 each coordinate substrate. Position 273 is an N6-(pyridoxal phosphate)lysine (lysine 273).

This sequence belongs to the class-I pyridoxal-phosphate-dependent aminotransferase family. In terms of assembly, homodimer and heterodimer. In vivo, the relevance of heterodimerization with other ACS enzymes is however unsure. Interacts with XBAT32. Interacts (via its C-terminal region) with ETO1 and EOL1. It depends on pyridoxal 5'-phosphate as a cofactor. Post-translationally, ubiquitinated by XBAT32. Ubiquitination probably leads to its subsequent degradation, thus controlling ethylene production. As to expression, expressed in roots, leaves and flowers.

The enzyme catalyses S-adenosyl-L-methionine = 1-aminocyclopropane-1-carboxylate + S-methyl-5'-thioadenosine + H(+). The protein operates within alkene biosynthesis; ethylene biosynthesis via S-adenosyl-L-methionine; ethylene from S-adenosyl-L-methionine: step 1/2. Its function is as follows. 1-aminocyclopropane-1-carboxylate synthase (ACS) enzymes catalyze the conversion of S-adenosyl-L-methionine (SAM) into 1-aminocyclopropane-1-carboxylate (ACC), a direct precursor of ethylene. This is 1-aminocyclopropane-1-carboxylate synthase 4 (ACS4) from Arabidopsis thaliana (Mouse-ear cress).